A 414-amino-acid chain; its full sequence is Serine/threonine transporter SstT (414 aa).

8 helical membrane passes run 22–42, 54–74, 89–109, 148–168, 189–209, 223–243, 305–325, and 337–357; these read GLVL…TIGF, IFVK…VMAA, IIVL…IAGF, AIFK…GLAL, IVHV…AETL, LLAV…PILV, MAGA…TLGL, and IVAA…LLLI.

This sequence belongs to the dicarboxylate/amino acid:cation symporter (DAACS) (TC 2.A.23) family.

The protein resides in the cell inner membrane. It catalyses the reaction L-serine(in) + Na(+)(in) = L-serine(out) + Na(+)(out). The enzyme catalyses L-threonine(in) + Na(+)(in) = L-threonine(out) + Na(+)(out). In terms of biological role, involved in the import of serine and threonine into the cell, with the concomitant import of sodium (symport system). The sequence is that of Serine/threonine transporter SstT from Haemophilus influenzae (strain 86-028NP).